Here is a 544-residue protein sequence, read N- to C-terminus: GMP synthase [glutamine-hydrolyzing] (544 aa).

The region spanning 12-210 (TILILDFGSQ…VKNVCGVRDG (199 aa)) is the Glutamine amidotransferase type-1 domain. Cys88 (nucleophile) is an active-site residue. Active-site residues include His184 and Glu186. The 209-residue stretch at 211–419 (WSMESFIPKE…LNIPEHLVGR (209 aa)) folds into the GMPS ATP-PPase domain. 239–245 (SGGVDST) contributes to the ATP binding site. The XMP site is built by Arg312, Asp481, Lys536, and Glu542.

In terms of assembly, homodimer. Also forms a small population of homotetramers. Mg(2+) is required as a cofactor.

Its subcellular location is the cytoplasm. It localises to the cytosol. It catalyses the reaction XMP + L-glutamine + ATP + H2O = GMP + L-glutamate + AMP + diphosphate + 2 H(+). Its pathway is purine metabolism; GMP biosynthesis; GMP from XMP (L-Gln route): step 1/1. With respect to regulation, the enzyme is inhibited by ECC1385; although this compound fails to inhibit growth of the organism. Catalyzes the conversion of xanthine monophosphate (XMP) to GMP in the presence of glutamine and ATP through an adenyl-XMP intermediate. In Cryptococcus neoformans var. grubii serotype A (strain H99 / ATCC 208821 / CBS 10515 / FGSC 9487) (Filobasidiella neoformans var. grubii), this protein is GMP synthase [glutamine-hydrolyzing].